Consider the following 492-residue polypeptide: MKTNFLAFGMSTLVAKNIGSITQVIGPVLDVAFSPGKMPNIYNSLIVKDQNSAGEEINVTCEVQQLLGNNKVRAVAMSATDGMMRGMKVIDTGAPLTVPVGEATLGRIFNVLGEPVDNLGPVEVTTTFPIHRAAPAFTQLDTKLSIFETGIKVVDLLAPYRRGGKIGLFGGAGVGKTVLIMELINNILKAHGGVSVFGGVGERTREGNDLYMEMKESKVINEQNISESKVALVYGQMNEPPGARMRVGLTALTMAEYFRDVNKQDVLLFIDNIFRFVQAGSEVSALLGRMPSAVGYQPTLSTEMGTLQERITSTKEGSITSIQAVYVPADDLTDPAPATTFAHLDATTVLSRGLAAKGIYPAVDPLDSTSTMLQPWIVGEEHYETAQGVKQTLQRYKELQDIIAILGLDELSEEDRLTVARARKIERFLSQPFFVAEVFTGSPGKYVSLRETIKGFQMILSGELDSLPEQAFYLVGNIDEATAKAATLQVES.

170–177 contributes to the ATP binding site; it reads GGAGVGKT.

It belongs to the ATPase alpha/beta chains family. F-type ATPases have 2 components, CF(1) - the catalytic core - and CF(0) - the membrane proton channel. CF(1) has five subunits: alpha(3), beta(3), gamma(1), delta(1), epsilon(1). CF(0) has four main subunits: a(1), b(1), b'(1) and c(9-12).

The protein resides in the plastid. The protein localises to the chloroplast thylakoid membrane. It carries out the reaction ATP + H2O + 4 H(+)(in) = ADP + phosphate + 5 H(+)(out). Its function is as follows. Produces ATP from ADP in the presence of a proton gradient across the membrane. The catalytic sites are hosted primarily by the beta subunits. This Marchantia polymorpha (Common liverwort) protein is ATP synthase subunit beta, chloroplastic.